We begin with the raw amino-acid sequence, 269 residues long: MEMO1 family protein TV1383 (269 aa).

Belongs to the MEMO1 family.

This is MEMO1 family protein TV1383 from Thermoplasma volcanium (strain ATCC 51530 / DSM 4299 / JCM 9571 / NBRC 15438 / GSS1).